The primary structure comprises 346 residues: Dihydroorotase (346 aa).

Residues histidine 13 and histidine 15 each contribute to the Zn(2+) site. Residues histidine 15 to arginine 17 and asparagine 41 contribute to the substrate site. Positions 99, 136, and 174 each coordinate Zn(2+). An N6-carboxylysine modification is found at lysine 99. Position 136 (histidine 136) interacts with substrate. Leucine 219 is a binding site for substrate. Residue aspartate 247 coordinates Zn(2+). The active site involves aspartate 247. Residues histidine 251 and alanine 263 each contribute to the substrate site.

This sequence belongs to the metallo-dependent hydrolases superfamily. DHOase family. Class II DHOase subfamily. In terms of assembly, homodimer. Zn(2+) is required as a cofactor.

It catalyses the reaction (S)-dihydroorotate + H2O = N-carbamoyl-L-aspartate + H(+). Its pathway is pyrimidine metabolism; UMP biosynthesis via de novo pathway; (S)-dihydroorotate from bicarbonate: step 3/3. Functionally, catalyzes the reversible cyclization of carbamoyl aspartate to dihydroorotate. The polypeptide is Dihydroorotase (Picosynechococcus sp. (strain ATCC 27264 / PCC 7002 / PR-6) (Agmenellum quadruplicatum)).